Reading from the N-terminus, the 737-residue chain is Glycogen [starch] synthase, muscle (737 aa).

Ser-8 is subject to Phosphoserine; by AMPK and PKA. Phosphoserine is present on Ser-11. Lys-39 contacts UDP. His-205 and Arg-211 together coordinate UDP-alpha-D-glucose. Alpha-D-glucose 6-phosphate contacts are provided by His-291, Glu-292, Gln-294, His-297, and Lys-301. Residue Arg-331 participates in UDP binding. Residue Arg-331 participates in UDP-alpha-D-glucose binding. Ser-412 bears the Phosphoserine mark. His-501 serves as a coordination point for alpha-D-glucose 6-phosphate. Positions 510, 512, and 513 each coordinate UDP-alpha-D-glucose. Thr-515 provides a ligand contact to UDP. Residues Arg-582 and Arg-586 each coordinate alpha-D-glucose 6-phosphate. The segment at 634–737 is disordered; it reads YRYPRPASVP…PTSSLGEERN (104 aa). At Ser-641 the chain carries Phosphoserine; by DYRK2, GSK3-alpha, GSK3-beta and PASK. A phosphoserine; by GSK3-alpha and GSK3-beta mark is found at Ser-645 and Ser-649. Ser-652 is modified (phosphoserine). Residue Ser-653 is modified to Phosphoserine; by GSK3-alpha and GSK3-beta. Ser-657 is modified (phosphoserine; by CK2). Residues 658-681 show a composition bias toward acidic residues; that stretch reads EDEEDPRNGPLEEDGERYDEDEEA. Residues 682–695 show a composition bias toward basic and acidic residues; sequence AKDRRNIRAPEWPR. Residue Ser-698 is modified to Phosphoserine. Residues 698 to 714 are compositionally biased toward polar residues; that stretch reads SCTSSTSGSKRNSVDTA. Position 700 is a phosphothreonine (Thr-700). Ser-710 is subject to Phosphoserine. Low complexity predominate over residues 715-737; sequence TSSSLSTPSEPLSPTSSLGEERN. The residue at position 721 (Thr-721) is a Phosphothreonine. Phosphoserine occurs at positions 727 and 731.

It belongs to the glycosyltransferase 3 family. Part of the GYS1-GYG1 complex, a heterooctamer composed of a tetramer of GYS1 and 2 dimers of GYG1, where each GYS1 protomer binds to one GYG1 subunit (via GYG1 C-terminus); the GYS1 tetramer may dissociate from GYG1 dimers to continue glycogen polymerization on its own. Phosphorylation at Ser-8 by AMPK inactivates the enzyme activity. Primed phosphorylation at Ser-657 (site 5) by CSNK2A1 and CSNK2A2 is required for inhibitory phosphorylation at Ser-641 (site 3a), Ser-645 (site 3b), Ser-649 (site 3c) and Ser-653 (site 4) by GSK3A an GSK3B. Phosphorylated at Ser-641 by PASK, leading to inactivation; phosphorylation by PASK is inhibited by glycogen. Phosphorylated at Ser-641 by DYRK2, leading to inactivation. Dephosphorylation at Ser-641 and Ser-645 by PP1 activates the enzyme.

The catalysed reaction is [(1-&gt;4)-alpha-D-glucosyl](n) + UDP-alpha-D-glucose = [(1-&gt;4)-alpha-D-glucosyl](n+1) + UDP + H(+). The protein operates within glycan biosynthesis; glycogen biosynthesis. With respect to regulation, allosteric activation by glucose-6-phosphate. Phosphorylation reduces the activity towards UDP-glucose. When in the non-phosphorylated state, glycogen synthase does not require glucose-6-phosphate as an allosteric activator; when phosphorylated it does. Functionally, glycogen synthase participates in the glycogen biosynthetic process along with glycogenin and glycogen branching enzyme. Extends the primer composed of a few glucose units formed by glycogenin by adding new glucose units to it. In this context, glycogen synthase transfers the glycosyl residue from UDP-Glc to the non-reducing end of alpha-1,4-glucan. This Pongo abelii (Sumatran orangutan) protein is Glycogen [starch] synthase, muscle (GYS1).